The following is a 70-amino-acid chain: Protein SlyX homolog (70 aa).

The protein belongs to the SlyX family.

The chain is Protein SlyX homolog from Shewanella loihica (strain ATCC BAA-1088 / PV-4).